The primary structure comprises 513 residues: Cytochrome P450 71D445 (513 aa).

The helical; Signal-anchor for type II membrane protein transmembrane segment at 12 to 28 (SEWAITSTITLLFLILL) threads the bilayer. Cysteine 450 contacts heme.

Belongs to the cytochrome P450 family. The cofactor is heme. Expressed in mature seeds.

It localises to the membrane. The enzyme catalyses (-)-casbene + reduced [NADPH--hemoprotein reductase] + O2 = 8-hydroxycasbene + oxidized [NADPH--hemoprotein reductase] + H2O + H(+). It carries out the reaction 4-hydroxycasbene + reduced [NADPH--hemoprotein reductase] + O2 = 4,8-dihydroxycasbene + oxidized [NADPH--hemoprotein reductase] + H2O + H(+). The catalysed reaction is 4,8-dihydroxycasbene + reduced [NADPH--hemoprotein reductase] + O2 = 4,5,8-trihydroxycasbene + oxidized [NADPH--hemoprotein reductase] + H2O + H(+). The protein operates within secondary metabolite biosynthesis; terpenoid biosynthesis. Its function is as follows. Involved in the biosynthesis of macrocyclic lathyrane type diterpenoids (also called Euphorbia factors) natural products, including the cyclization route from casbene to jolkinol C, a precursor for ingenol mebutate that is used to treat actinic keratosis, a precancerous skin condition. Catalyzes the hydroxylation of (-)-casbene and 4-hydroxycasbene to produce 8-hydroxycasbene and 4,8-dihydroxycasbene, respectively. Also mediates the formation of 4-hydroxy-8-ketocasbene from 4,8-dihydroxycasbene. Together with ADH1, triggers the biosynthesis of 8-ketocasbene from 8-hydroxycasbene. This is Cytochrome P450 71D445 from Euphorbia lathyris (Caper spurge).